The sequence spans 246 residues: Octanoyltransferase (246 aa).

Residues 30 to 227 (GRIGNTLLLL…QFGRVFGHQV (198 aa)) enclose the BPL/LPL catalytic domain. Residues 75-82 (RGGDVTYH), 155-157 (AIG), and 168-170 (GFA) contribute to the substrate site. Cys-186 serves as the catalytic Acyl-thioester intermediate.

This sequence belongs to the LipB family.

The protein localises to the cytoplasm. The catalysed reaction is octanoyl-[ACP] + L-lysyl-[protein] = N(6)-octanoyl-L-lysyl-[protein] + holo-[ACP] + H(+). It participates in protein modification; protein lipoylation via endogenous pathway; protein N(6)-(lipoyl)lysine from octanoyl-[acyl-carrier-protein]: step 1/2. Functionally, catalyzes the transfer of endogenously produced octanoic acid from octanoyl-acyl-carrier-protein onto the lipoyl domains of lipoate-dependent enzymes. Lipoyl-ACP can also act as a substrate although octanoyl-ACP is likely to be the physiological substrate. This chain is Octanoyltransferase, found in Acidobacterium capsulatum (strain ATCC 51196 / DSM 11244 / BCRC 80197 / JCM 7670 / NBRC 15755 / NCIMB 13165 / 161).